Here is a 64-residue protein sequence, read N- to C-terminus: Putative antitoxin AF_1074 (64 aa).

Belongs to the UPF0165 family.

In terms of biological role, possibly the antitoxin component of a type II toxin-antitoxin (TA) system. In Archaeoglobus fulgidus (strain ATCC 49558 / DSM 4304 / JCM 9628 / NBRC 100126 / VC-16), this protein is Putative antitoxin AF_1074.